The chain runs to 38 residues: Potassium channel toxin alpha-KTx 2.10 (38 aa).

Intrachain disulfides connect C7–C29, C13–C34, and C17–C36.

Expressed by the venom gland.

It localises to the secreted. In terms of biological role, blocks human voltage-gated potassium (Kv) channel Kv1.2/KCNA2. Does not inhibit human Kv1.1/KCNA1 at 100nM concentration. The protein is Potassium channel toxin alpha-KTx 2.10 of Centruroides bonito (Scorpion).